Here is a 125-residue protein sequence, read N- to C-terminus: Snaclec coagulation factor IX/factor X-binding protein subunit B (125 aa).

The C-type lectin domain occupies 1–122 (DCSSGWTAYG…SLFGHFVCKS (122 aa)). Intrachain disulfides connect C2-C13, C30-C120, and C97-C112. Residues S41 and E47 each coordinate Ca(2+).

Belongs to the snaclec family. Heterodimer of subunits A and B; disulfide-linked. In terms of tissue distribution, expressed by the venom gland.

The protein localises to the secreted. Functionally, anticoagulant protein which binds to coagulation factor IX (F9) and coagulation factor X (F10) in the presence of calcium. It may bind the gamma-carboxyglutamic acid-domain regions of factors with a 1 to 1 stoichiometry. The dissociation constant (K(d)) are 6.6 nM for factor IX (F9) and 125 nM for factor X (F10). Does not bind carbohydrates. The protein is Snaclec coagulation factor IX/factor X-binding protein subunit B of Echis carinatus (Saw-scaled viper).